A 477-amino-acid chain; its full sequence is MKVNLPAFERAGVMIVGDVMLDRYWYGPTCRISPEAPVPVVKVNTVEERPGGAANVAMNIASLGANARLVGLTGIDDAARALSKTLAEFNVKCDFVSVPTHPTITKLRVLSRNQQLIRLDFEEGFEGVDPEPLHERINQALGSIGALVLSDYAKGALTSVQTMIALARQADVAVLIDPKGTDFERYRGATLLTPNLSEFEAVAGKCKSEDELVERGMKLIANYDLSALLVTRSEQGMTLLQPNKAPLHMPTQAQEVYDVTGAGDTVIGVLAATLAAGNTLEEACYFANAAAGVVVGKLGTSTVSPVELENAVRGRAATGFGVMTEEELKQAVASARKRGEKVVMTNGVFDILHAGHVSYLANARKLGDRLIVAVNSDASTKRLKGESRPVNPLEQRMIVLGALESVDWVVSFEEDTPQRLIAGILPDLLVKGGDYKPEEIAGSEEVWANGGEVMVLNFEDGCSTTNIIKKIQTESEK.

Positions 1–318 (MKVNLPAFER…ENAVRGRAAT (318 aa)) are ribokinase. 195 to 198 (NLSE) lines the ATP pocket. Aspartate 264 is an active-site residue. The segment at 344 to 477 (MTNGVFDILH…IKKIQTESEK (134 aa)) is cytidylyltransferase.

This sequence in the N-terminal section; belongs to the carbohydrate kinase PfkB family. It in the C-terminal section; belongs to the cytidylyltransferase family. Homodimer.

It carries out the reaction D-glycero-beta-D-manno-heptose 7-phosphate + ATP = D-glycero-beta-D-manno-heptose 1,7-bisphosphate + ADP + H(+). It catalyses the reaction D-glycero-beta-D-manno-heptose 1-phosphate + ATP + H(+) = ADP-D-glycero-beta-D-manno-heptose + diphosphate. It participates in nucleotide-sugar biosynthesis; ADP-L-glycero-beta-D-manno-heptose biosynthesis; ADP-L-glycero-beta-D-manno-heptose from D-glycero-beta-D-manno-heptose 7-phosphate: step 1/4. The protein operates within nucleotide-sugar biosynthesis; ADP-L-glycero-beta-D-manno-heptose biosynthesis; ADP-L-glycero-beta-D-manno-heptose from D-glycero-beta-D-manno-heptose 7-phosphate: step 3/4. Catalyzes the phosphorylation of D-glycero-D-manno-heptose 7-phosphate at the C-1 position to selectively form D-glycero-beta-D-manno-heptose-1,7-bisphosphate. In terms of biological role, catalyzes the ADP transfer from ATP to D-glycero-beta-D-manno-heptose 1-phosphate, yielding ADP-D-glycero-beta-D-manno-heptose. The polypeptide is Bifunctional protein HldE (Salmonella arizonae (strain ATCC BAA-731 / CDC346-86 / RSK2980)).